We begin with the raw amino-acid sequence, 308 residues long: UDP-N-acetylenolpyruvoylglucosamine reductase (308 aa).

The FAD-binding PCMH-type domain maps to 24 to 187 (RVGGPADWLF…VSASLQGVPG (164 aa)). R167 is a catalytic residue. The interval 199–230 (QLDKRDQTQPTKERSAGSTFRNPAGFSSTGRA) is disordered. Residues 200–213 (LDKRDQTQPTKERS) are compositionally biased toward basic and acidic residues. A compositionally biased stretch (polar residues) spans 214-228 (AGSTFRNPAGFSSTG). The Proton donor role is filled by S216. E298 is an active-site residue.

It belongs to the MurB family. FAD is required as a cofactor.

It is found in the cytoplasm. It catalyses the reaction UDP-N-acetyl-alpha-D-muramate + NADP(+) = UDP-N-acetyl-3-O-(1-carboxyvinyl)-alpha-D-glucosamine + NADPH + H(+). It participates in cell wall biogenesis; peptidoglycan biosynthesis. Cell wall formation. This Ruegeria pomeroyi (strain ATCC 700808 / DSM 15171 / DSS-3) (Silicibacter pomeroyi) protein is UDP-N-acetylenolpyruvoylglucosamine reductase.